The primary structure comprises 162 residues: NADH-quinone oxidoreductase subunit I (162 aa).

4Fe-4S ferredoxin-type domains follow at residues 54-83 (RRYE…IESE) and 93-122 (TRYD…ETQI). C63, C66, C69, C73, C102, C105, C108, and C112 together coordinate [4Fe-4S] cluster.

This sequence belongs to the complex I 23 kDa subunit family. As to quaternary structure, NDH-1 is composed of 14 different subunits. Subunits NuoA, H, J, K, L, M, N constitute the membrane sector of the complex. Requires [4Fe-4S] cluster as cofactor.

The protein resides in the cell inner membrane. It carries out the reaction a quinone + NADH + 5 H(+)(in) = a quinol + NAD(+) + 4 H(+)(out). Its function is as follows. NDH-1 shuttles electrons from NADH, via FMN and iron-sulfur (Fe-S) centers, to quinones in the respiratory chain. The immediate electron acceptor for the enzyme in this species is believed to be ubiquinone. Couples the redox reaction to proton translocation (for every two electrons transferred, four hydrogen ions are translocated across the cytoplasmic membrane), and thus conserves the redox energy in a proton gradient. The protein is NADH-quinone oxidoreductase subunit I of Burkholderia pseudomallei (strain 668).